Consider the following 433-residue polypeptide: ATP-dependent RNA helicase SUB2 (433 aa).

The segment covering 1–17 (MSAENQEELLDYSDSEE) has biased composition (acidic residues). A disordered region spans residues 1–39 (MSAENQEELLDYSDSEEIAVPTTTQAGEGESANDKEADK). The Q motif motif lies at 49–77 (TGFRDFLLKPELLRAIGDCGFEHPSEVQQ). The region spanning 80–255 (IPQSILGTDV…KKFMQNPLEI (176 aa)) is the Helicase ATP-binding domain. Residue 93-100 (AKSGLGKT) participates in ATP binding. The DEAD box motif lies at 202–205 (DECD). Residues 267–428 (GLQQYYIKLE…EFPEEGVDPS (162 aa)) enclose the Helicase C-terminal domain.

The protein belongs to the DEAD box helicase family. DECD subfamily.

It is found in the nucleus. It catalyses the reaction ATP + H2O = ADP + phosphate + H(+). Functionally, ATP-binding RNA helicase involved in transcription elongation and required for the export of mRNA out of the nucleus. SUB2 also plays a role in pre-mRNA splicing and spliceosome assembly. May be involved in rDNA and telomeric silencing, and maintenance of genome integrity. In Lodderomyces elongisporus (strain ATCC 11503 / CBS 2605 / JCM 1781 / NBRC 1676 / NRRL YB-4239) (Yeast), this protein is ATP-dependent RNA helicase SUB2 (SUB2).